The sequence spans 574 residues: Amino-acid acetyltransferase, mitochondrial (574 aa).

A mitochondrion-targeting transit peptide spans 1–13 (MWRRIFAHGLKYD). In terms of domain architecture, N-acetyltransferase spans 392-560 (KGAKPSNNSP…KRLREFMRSV (169 aa)).

Belongs to the acetyltransferase family. As to quaternary structure, interacts with the acetylglutamate kinase chain of AGR5,6.

It localises to the mitochondrion. It carries out the reaction L-glutamate + acetyl-CoA = N-acetyl-L-glutamate + CoA + H(+). It functions in the pathway amino-acid biosynthesis; L-arginine biosynthesis; N(2)-acetyl-L-ornithine from L-glutamate: step 1/4. Its activity is regulated as follows. Feedback inhibition by L-arginine. In terms of biological role, N-acetylglutamate synthase involved in arginine biosynthesis. In Saccharomyces cerevisiae (strain YJM789) (Baker's yeast), this protein is Amino-acid acetyltransferase, mitochondrial (ARG2).